The following is a 141-amino-acid chain: Large ribosomal subunit protein bL17 (141 aa).

It belongs to the bacterial ribosomal protein bL17 family. Part of the 50S ribosomal subunit. Contacts protein L32.

The chain is Large ribosomal subunit protein bL17 from Maridesulfovibrio salexigens (strain ATCC 14822 / DSM 2638 / NCIMB 8403 / VKM B-1763) (Desulfovibrio salexigens).